We begin with the raw amino-acid sequence, 877 residues long: DNA repair protein rad16 (877 aa).

Residue serine 71 is modified to Phosphoserine; by CK2. The disordered stretch occupies residues 440–490 (SKSIKKPEPSKEREASNTTSRKGVPPSKRRRVRGGNNATSRTTSDNTDAND). Over residues 444-454 (KKPEPSKEREA) the composition is skewed to basic and acidic residues. Positions 475–490 (NNATSRTTSDNTDAND) are enriched in polar residues. In terms of domain architecture, ERCC4 spans 652 to 732 (RVIVDLREFR…IPVLLIEFEQ (81 aa)).

This sequence belongs to the XPF family. Heterodimer composed of rad16 and swi10.

It is found in the nucleus. Its subcellular location is the cytoplasm. It localises to the cytoskeleton. The protein resides in the microtubule organizing center. The protein localises to the spindle pole body. In terms of biological role, endonuclease that specifically degrades single-stranded DNA and which is involved in nucleotide excision repair of DNA damaged with UV light, bulky adducts, or cross-linking agents. Required for double strand break-induced interchromosomal gene conversion. This is DNA repair protein rad16 (rad16) from Schizosaccharomyces pombe (strain 972 / ATCC 24843) (Fission yeast).